The sequence spans 339 residues: Ketol-acid reductoisomerase (NADP(+)) (339 aa).

The KARI N-terminal Rossmann domain occupies 1–182 (MRVYYDRDAD…GGGRSGVIET (182 aa)). NADP(+) contacts are provided by residues 24-27 (YGSQ), Arg-48, Ser-51, Thr-53, and 83-86 (DELQ). Residue His-108 is part of the active site. Position 134 (Gly-134) interacts with NADP(+). The KARI C-terminal knotted domain maps to 183–328 (TFKEECETDL…GKLRAMMPWI (146 aa)). 4 residues coordinate Mg(2+): Asp-191, Glu-195, Glu-227, and Glu-231. Residue Ser-252 participates in substrate binding.

It belongs to the ketol-acid reductoisomerase family. The cofactor is Mg(2+).

It carries out the reaction (2R)-2,3-dihydroxy-3-methylbutanoate + NADP(+) = (2S)-2-acetolactate + NADPH + H(+). It catalyses the reaction (2R,3R)-2,3-dihydroxy-3-methylpentanoate + NADP(+) = (S)-2-ethyl-2-hydroxy-3-oxobutanoate + NADPH + H(+). The protein operates within amino-acid biosynthesis; L-isoleucine biosynthesis; L-isoleucine from 2-oxobutanoate: step 2/4. It functions in the pathway amino-acid biosynthesis; L-valine biosynthesis; L-valine from pyruvate: step 2/4. Functionally, involved in the biosynthesis of branched-chain amino acids (BCAA). Catalyzes an alkyl-migration followed by a ketol-acid reduction of (S)-2-acetolactate (S2AL) to yield (R)-2,3-dihydroxy-isovalerate. In the isomerase reaction, S2AL is rearranged via a Mg-dependent methyl migration to produce 3-hydroxy-3-methyl-2-ketobutyrate (HMKB). In the reductase reaction, this 2-ketoacid undergoes a metal-dependent reduction by NADPH to yield (R)-2,3-dihydroxy-isovalerate. In Brucella melitensis biotype 2 (strain ATCC 23457), this protein is Ketol-acid reductoisomerase (NADP(+)).